The primary structure comprises 1066 residues: Vinculin (1066 aa).

An N-terminal globular head region spans residues 1–835 (MPVFHTRTIE…GAVAKVREAF (835 aa)). S97 carries the post-translational modification Phosphoserine. Positions 168–208 (MTKMAKMIDERQQELTHQEHRVMLVNSMNTVKELLPVLISA) are talin-interaction. An N6-acetyllysine modification is found at K173. 3 tandem repeats follow at residues 259–369 (ASKD…KVEN), 370–479 (AARK…KTNR), and 480–589 (AVAN…QMQE). A 3 X 112 AA tandem repeats region spans residues 259-589 (ASKDTEAMKR…LKDLKAQMQE (331 aa)). Phosphoserine occurs at positions 260, 272, 275, 290, 346, and 434. K496 carries the post-translational modification N6-acetyllysine. A Phosphotyrosine modification is found at Y537. S574, S579, and S600 each carry phosphoserine. T604 and T672 each carry phosphothreonine. S721 is subject to Phosphoserine. The tract at residues 741 to 764 (MANIQPQMLVAGATSIARRANRIL) is interaction with ACTN4. Phosphoserine occurs at positions 795 and 809. At Y822 the chain carries Phosphotyrosine. The segment at 836–878 (QPQEPDFPPPPPDLEQLRLTDELAPPKPPLPEGEVPPPRPPPP) is linker (Pro-rich). The segment at 857 to 887 (ELAPPKPPLPEGEVPPPRPPPPEEKDEEFPE) is disordered. Residues 860–876 (PPKPPLPEGEVPPPRPP) are compositionally biased toward pro residues. A C-terminal tail region spans residues 879–1066 (EEKDEEFPEQ…RWVRKTPWYQ (188 aa)). Facilitates phospholipid membrane insertion regions lie at residues 935 to 978 (RLVR…KRIR) and 1052 to 1066 (AGFT…PWYQ). A Phosphotyrosine; by SRC-type Tyr-kinases modification is found at Y1065.

Belongs to the vinculin/alpha-catenin family. As to quaternary structure, exhibits self-association properties. Part of a complex composed of THSD1, PTK2/FAK1, TLN1 and VCL. Interacts with APBB1IP, NRAP and TLN1. Interacts with SYNM. Interacts with CTNNB1 and this interaction is necessary for its localization to the cell-cell junctions and for its function in regulating cell surface expression of E-cadherin. Interacts with SORBS1. Interacts with SYNM. Interacts with CTNNA1. Binds to ACTN4; this interaction triggers conformational changes. Interacts with FLII. In terms of processing, phosphorylated; on serines, threonines and tyrosines. Phosphorylation on Tyr-1065 in activated platelets affects head-tail interactions and cell spreading but has no effect on actin binding nor on localization to focal adhesion plaques. Acetylated; mainly by myristic acid but also by a small amount of palmitic acid.

It is found in the cell membrane. Its subcellular location is the cell junction. The protein localises to the adherens junction. It localises to the focal adhesion. The protein resides in the cytoplasm. It is found in the cytoskeleton. Its subcellular location is the sarcolemma. The protein localises to the cell projection. It localises to the podosome. Its function is as follows. Actin filament (F-actin)-binding protein involved in cell-matrix adhesion and cell-cell adhesion. Regulates cell-surface E-cadherin expression and potentiates mechanosensing by the E-cadherin complex. May also play important roles in cell morphology and locomotion. The polypeptide is Vinculin (Vcl) (Mus musculus (Mouse)).